A 550-amino-acid polypeptide reads, in one-letter code: MSAKEVKFGVDARDRMLRGVDILHNAVKVTLGPKGRNVVLDKSFGAPRITKDGVTVAKEIELEDKFENMGAQMVREVASKSADAAGDGTTTATVLAAAIVREGAKSVAAGMNPMDLKRGIDMAVEAVVADLVKNSKKVTSNEEIAQVGTISANGDAEIGKFISDAMKKVGNEGVITVEEAKSLETELEVVEGMQFDRGYISPYFVTNADKMRVEMDDAYVLINEKKLSQLNELLPLLEAVVQSGKPLVIIAEDVEGEALATLVVNRLRGGLKVAAVKAPGFGDRRKAMLQDIAILTGGQAISEDLGIKLENVTLNMLGRAKKVMIDKENTTIVSGAGKKADIEARVAQIKAQIEETTSDYDREKLQERLAKLAGGVAVIRVGGATEVEVKERKDRVDDAMHATRAAVEEGILPGGGVALLRASEHLKGIRTKNDDQKTGVEIVRKALSYPARQIAINAGEDGSVIVGKILEKDQYSYGYDSQTGEYGNLVSKGIIDPTKVVRVAIQNAASVAALLITTEAMVAEVPKKNTGAGGMPPGGGGMGGMGGMDF.

ATP-binding positions include 30-33 (TLGP), lysine 51, 87-91 (DGTTT), glycine 415, and aspartate 496.

Belongs to the chaperonin (HSP60) family. As to quaternary structure, forms a cylinder of 14 subunits composed of two heptameric rings stacked back-to-back. Interacts with the co-chaperonin GroES.

The protein resides in the cytoplasm. It carries out the reaction ATP + H2O + a folded polypeptide = ADP + phosphate + an unfolded polypeptide.. Its function is as follows. Together with its co-chaperonin GroES, plays an essential role in assisting protein folding. The GroEL-GroES system forms a nano-cage that allows encapsulation of the non-native substrate proteins and provides a physical environment optimized to promote and accelerate protein folding. The protein is Chaperonin GroEL 2 of Bradyrhizobium diazoefficiens (strain JCM 10833 / BCRC 13528 / IAM 13628 / NBRC 14792 / USDA 110).